Reading from the N-terminus, the 247-residue chain is Fasciclin-like arabinogalactan protein 6 (247 aa).

The first 23 residues, 1-23 (MSSSLFSYVVLLIFLFTIPYIQS), serve as a signal peptide directing secretion. One can recognise an FAS1 domain in the interval 36 to 182 (PINLTAILEA…LAVYVVDSVL (147 aa)). N-linked (GlcNAc...) asparagine glycosylation is found at Asn38, Asn57, Asn70, Asn142, and Asn153. Residues 192-212 (TTPTGAPAPKSSTSSSDADSP) show a composition bias toward low complexity. Positions 192–221 (TTPTGAPAPKSSTSSSDADSPAADDEHKSA) are disordered. Gly222 carries GPI-anchor amidated glycine lipidation. Positions 223 to 247 (SSVKRTSLGIVVSFALFCCSVIYIA) are cleaved as a propeptide — removed in mature form.

It belongs to the fasciclin-like AGP family.

The protein resides in the cell membrane. Its function is as follows. May be a cell surface adhesion protein. The chain is Fasciclin-like arabinogalactan protein 6 (FLA6) from Arabidopsis thaliana (Mouse-ear cress).